A 312-amino-acid polypeptide reads, in one-letter code: Acetaldehyde dehydrogenase (312 aa).

11 to 14 (SGNI) is an NAD(+) binding site. Residue cysteine 129 is the Acyl-thioester intermediate of the active site. Residues 160 to 168 (SAGPGTRAN) and asparagine 287 each bind NAD(+).

It belongs to the acetaldehyde dehydrogenase family.

The enzyme catalyses acetaldehyde + NAD(+) + CoA = acetyl-CoA + NADH + H(+). The polypeptide is Acetaldehyde dehydrogenase (xylQ) (Sphingobium yanoikuyae (Sphingomonas yanoikuyae)).